The chain runs to 386 residues: Probable Xaa-Pro aminopeptidase PMAA_074180 (386 aa).

Positions 160, 171, 311, and 350 each coordinate Mn(2+).

This sequence belongs to the peptidase M24B family. Mn(2+) is required as a cofactor.

The catalysed reaction is Release of any N-terminal amino acid, including proline, that is linked to proline, even from a dipeptide or tripeptide.. Its function is as follows. Catalyzes the removal of a penultimate prolyl residue from the N-termini of peptides. The chain is Probable Xaa-Pro aminopeptidase PMAA_074180 from Talaromyces marneffei (strain ATCC 18224 / CBS 334.59 / QM 7333) (Penicillium marneffei).